Here is a 49-residue protein sequence, read N- to C-terminus: Metallothionein (49 aa).

The segment at 1–16 (SCAGSCKCKNCRCRSC) is beta. 17 residues coordinate a divalent metal cation: C2, C6, C8, C11, C13, C16, C20, C21, C23, C24, C28, C31, C35, C37, C45, C47, and C48. An alpha region spans residues 17-49 (RKSCCSCCPAGCNNCAKGCVCKEPASSKCSCCH).

Belongs to the metallothionein superfamily. Type 1 family.

Its function is as follows. Metallothioneins have a high content of cysteine residues that bind various heavy metals. This chain is Metallothionein, found in Phasianus colchicus colchicus (Black-necked pheasant).